The sequence spans 623 residues: Protein FAM234B (623 aa).

The interval 1–82 (MATVLSRALK…TSERAPEGYP (82 aa)) is disordered. Residues 104–124 (AVFLLTVVISMILVLVCAFLI) traverse the membrane as a helical segment.

It belongs to the FAM234 family.

Its subcellular location is the membrane. The protein resides in the golgi outpost. The protein localises to the cytoplasm. It localises to the cytoskeleton. It is found in the microtubule organizing center. In Gallus gallus (Chicken), this protein is Protein FAM234B (FAM234B).